The sequence spans 461 residues: MKISFIEPAILLYAFAMTLTIPLTAQYVYRRIWEETGNYTFTSSSNVSECEQNKSSSTFAFQEEVQKKASLFSLQVEISGLIPGLVSTFMLLSSSDNHGRKLPMVLSSLGSLGTNLWLCAMSYFDLPLQLLVASTFIGALFGNYTTFWGACFAYIVDQEKEYKHRIIRIAVLDFMLGVVTGLTGLSSGYFIRELGFAWSYFIIAVVVLVNLAYILFFLSDPIKESSSQIVTMSCSESLKDLFYRTYMLFKNGSCKRRSLLCLLIFTLVVYFFVVFGITPVFTLYELGPPLCWNEVYIGYGSALGSLSFLSSFLGIWLFSYCLKDIHIAYVGIFTTMVGMMLTAFTRTTLMMFLVRISFFFTIMPLSILRSMLSKVVHSTEQGVLFACIAFLETLGGVTSTSAYNGIYSATVAWYPGFVFLLSAGLLVLPAVSLCMVKCIGWEEGSYTLLIHDEPSEHTSDS.

A signal peptide spans 1 to 25; that stretch reads MKISFIEPAILLYAFAMTLTIPLTA. Residues 26-70 lie on the Extracellular side of the membrane; sequence QYVYRRIWEETGNYTFTSSSNVSECEQNKSSSTFAFQEEVQKKAS. Residues Asn38, Asn46, and Asn53 are each glycosylated (N-linked (GlcNAc...) asparagine). A helical transmembrane segment spans residues 71–91; the sequence is LFSLQVEISGLIPGLVSTFML. Residues 92–103 are Cytoplasmic-facing; the sequence is LSSSDNHGRKLP. A helical transmembrane segment spans residues 104–124; the sequence is MVLSSLGSLGTNLWLCAMSYF. The Extracellular segment spans residues 125–135; that stretch reads DLPLQLLVAST. A helical transmembrane segment spans residues 136 to 156; that stretch reads FIGALFGNYTTFWGACFAYIV. Topologically, residues 157–170 are cytoplasmic; it reads DQEKEYKHRIIRIA. The helical transmembrane segment at 171–191 threads the bilayer; sequence VLDFMLGVVTGLTGLSSGYFI. At 192 to 197 the chain is on the extracellular side; it reads RELGFA. The chain crosses the membrane as a helical span at residues 198–218; the sequence is WSYFIIAVVVLVNLAYILFFL. Topologically, residues 219–260 are cytoplasmic; it reads SDPIKESSSQIVTMSCSESLKDLFYRTYMLFKNGSCKRRSLL. A helical transmembrane segment spans residues 261 to 281; it reads CLLIFTLVVYFFVVFGITPVF. Over 282 to 301 the chain is Extracellular; sequence TLYELGPPLCWNEVYIGYGS. A helical transmembrane segment spans residues 302–322; the sequence is ALGSLSFLSSFLGIWLFSYCL. Topologically, residues 323 to 324 are cytoplasmic; it reads KD. The helical transmembrane segment at 325-345 threads the bilayer; it reads IHIAYVGIFTTMVGMMLTAFT. The Extracellular segment spans residues 346–347; the sequence is RT. The helical transmembrane segment at 348-368 threads the bilayer; it reads TLMMFLVRISFFFTIMPLSIL. Residues 369–381 lie on the Cytoplasmic side of the membrane; it reads RSMLSKVVHSTEQ. The chain crosses the membrane as a helical span at residues 382–402; it reads GVLFACIAFLETLGGVTSTSA. Residues 403-415 lie on the Extracellular side of the membrane; the sequence is YNGIYSATVAWYP. Residues 416-436 form a helical membrane-spanning segment; the sequence is GFVFLLSAGLLVLPAVSLCMV. Residues 437–461 are Cytoplasmic-facing; that stretch reads KCIGWEEGSYTLLIHDEPSEHTSDS. The Tyrosine-based lysosomal-sorting motif signature appears at 446-449; sequence YTLL.

Belongs to the major facilitator superfamily. SLC46A family.

The protein localises to the lysosome membrane. The enzyme catalyses estrone 3-sulfate(out) + n H(+)(out) = estrone 3-sulfate(in) + n H(+)(in). The catalysed reaction is 25-hydroxyvitamin D3 sulfate(out) + n H(+)(out) = 25-hydroxyvitamin D3 sulfate(in) + n H(+)(in). It carries out the reaction cholate(out) + n H(+)(out) = cholate(in) + n H(+)(in). It catalyses the reaction glycocholate(out) + n H(+)(out) = glycocholate(in) + n H(+)(in). The enzyme catalyses taurocholate(out) + n H(+)(out) = taurocholate(in) + n H(+)(in). The catalysed reaction is dehydroepiandrosterone 3-sulfate(out) + n H(+)(out) = dehydroepiandrosterone 3-sulfate(in) + n H(+)(in). It carries out the reaction N-acetyl-D-muramoyl-L-alanyl-D-isoglutamine(out) + n H(+)(out) = N-acetyl-D-muramoyl-L-alanyl-D-isoglutamine(in) + n H(+)(in). It catalyses the reaction 2',3'-cGAMP(out) + n H(+)(out) = 2',3'-cGAMP(in) + n H(+)(in). Lysosomal proton-coupled steroid conjugate and bile acid transporter. Preferentially recognizes lipophilic steroid conjugates or bile acis as endogenous substrates and seems to mediate escape from lysosomes to the cytoplasm. Modulates hepatic cytosolic copper homeostasis, maybe acting as a lysosomal copper transporter and sequestering copper ions in the lysosome. Delivers pathogen-associated molecular patterns to cytosolic pattern recognition receptors as part of the innate immune response to microbes. Selectively transports bacterial muramyl dipeptide (MDP) into the cytosol for recognition by NOD2, triggering inflammatory responses. Likely acts as a redundant importer of cyclic GMP-AMP dinucleotides (cGAMPs) in monocyte and macrophage cell lineages. The transport mechanism, its electrogenicity and stoichiometry remain to be elucidated. This chain is Lysosomal proton-coupled steroid conjugate and bile acid symporter SLC46A3 (Slc46a3), found in Rattus norvegicus (Rat).